The sequence spans 388 residues: Succinate--CoA ligase [ADP-forming] subunit beta (388 aa).

The ATP-grasp domain maps to Lys9–Glu244. ATP contacts are provided by residues Lys46, Gly53–Gly55, Glu99, Ala102, and Glu107. Asn199 and Asp213 together coordinate Mg(2+). Substrate-binding positions include Asn264 and Gly321–Met323.

The protein belongs to the succinate/malate CoA ligase beta subunit family. Heterotetramer of two alpha and two beta subunits. Requires Mg(2+) as cofactor.

It catalyses the reaction succinate + ATP + CoA = succinyl-CoA + ADP + phosphate. The enzyme catalyses GTP + succinate + CoA = succinyl-CoA + GDP + phosphate. It functions in the pathway carbohydrate metabolism; tricarboxylic acid cycle; succinate from succinyl-CoA (ligase route): step 1/1. Its function is as follows. Succinyl-CoA synthetase functions in the citric acid cycle (TCA), coupling the hydrolysis of succinyl-CoA to the synthesis of either ATP or GTP and thus represents the only step of substrate-level phosphorylation in the TCA. The beta subunit provides nucleotide specificity of the enzyme and binds the substrate succinate, while the binding sites for coenzyme A and phosphate are found in the alpha subunit. This is Succinate--CoA ligase [ADP-forming] subunit beta from Burkholderia cenocepacia (strain ATCC BAA-245 / DSM 16553 / LMG 16656 / NCTC 13227 / J2315 / CF5610) (Burkholderia cepacia (strain J2315)).